A 91-amino-acid polypeptide reads, in one-letter code: Large ribosomal subunit protein eL31 (91 aa).

The protein belongs to the eukaryotic ribosomal protein eL31 family.

This chain is Large ribosomal subunit protein eL31, found in Pyrobaculum neutrophilum (strain DSM 2338 / JCM 9278 / NBRC 100436 / V24Sta) (Thermoproteus neutrophilus).